The following is a 208-amino-acid chain: Uracil phosphoribosyltransferase (208 aa).

5-phospho-alpha-D-ribose 1-diphosphate-binding positions include arginine 78, arginine 103, and 130–138; that span reads DPMLATGGS. Residues isoleucine 193 and 198-200 contribute to the uracil site; that span reads GDA. 5-phospho-alpha-D-ribose 1-diphosphate is bound at residue aspartate 199.

It belongs to the UPRTase family. The cofactor is Mg(2+).

It carries out the reaction UMP + diphosphate = 5-phospho-alpha-D-ribose 1-diphosphate + uracil. Its pathway is pyrimidine metabolism; UMP biosynthesis via salvage pathway; UMP from uracil: step 1/1. Its activity is regulated as follows. Allosterically activated by GTP. Its function is as follows. Catalyzes the conversion of uracil and 5-phospho-alpha-D-ribose 1-diphosphate (PRPP) to UMP and diphosphate. The sequence is that of Uracil phosphoribosyltransferase from Roseiflexus castenholzii (strain DSM 13941 / HLO8).